The primary structure comprises 135 residues: UPF0355 protein MRSA252 (135 aa).

The protein belongs to the UPF0355 family.

In Staphylococcus aureus (strain MRSA252), this protein is UPF0355 protein MRSA252.